A 57-amino-acid polypeptide reads, in one-letter code: DNA-directed RNA polymerase subunit Rpo6 (57 aa).

This sequence belongs to the archaeal Rpo6/eukaryotic RPB6 RNA polymerase subunit family. Part of the RNA polymerase complex.

The protein resides in the cytoplasm. Its subcellular location is the chromosome. It catalyses the reaction RNA(n) + a ribonucleoside 5'-triphosphate = RNA(n+1) + diphosphate. Functionally, DNA-dependent RNA polymerase (RNAP) catalyzes the transcription of DNA into RNA using the four ribonucleoside triphosphates as substrates. The chain is DNA-directed RNA polymerase subunit Rpo6 from Thermococcus kodakarensis (strain ATCC BAA-918 / JCM 12380 / KOD1) (Pyrococcus kodakaraensis (strain KOD1)).